We begin with the raw amino-acid sequence, 80 residues long: Small ribosomal subunit protein uS17 (80 aa).

It belongs to the universal ribosomal protein uS17 family. Part of the 30S ribosomal subunit.

Functionally, one of the primary rRNA binding proteins, it binds specifically to the 5'-end of 16S ribosomal RNA. The chain is Small ribosomal subunit protein uS17 from Chelativorans sp. (strain BNC1).